We begin with the raw amino-acid sequence, 308 residues long: MAAAAEESGWRRVGFVGAGRMAEAIAQGLIQAGKVEAEHVLASAPSDRNLCRFRAMGCQTTHSNLEVLHSCSLVFFATKPHILPAVLVEVAPAVTAEHILVSVAAGVSLSTLEKLLPPMARVLRVSPNLPCIVQEGAMVMARGCCAGSYEAQLLRSLLEACGQCEEVPEAQVDVHTGLSGSGVAFVCAFSEALAEGAIKMGMPSGLAHRIAAQTLLGTAKVLLQKGQHPAQLRTDVCTPGGTTIYGLHVLEQGGLRATAMSAVEAATCRARELSRNPSPVVAQVPSVLQALQGEGALAHREHSSVARS.

The protein belongs to the pyrroline-5-carboxylate reductase family. In terms of assembly, homodecamer; composed of 5 homodimers.

Its subcellular location is the cytoplasm. The enzyme catalyses L-proline + NADP(+) = (S)-1-pyrroline-5-carboxylate + NADPH + 2 H(+). It catalyses the reaction L-proline + NAD(+) = (S)-1-pyrroline-5-carboxylate + NADH + 2 H(+). Its pathway is amino-acid biosynthesis; L-proline biosynthesis; L-proline from L-glutamate 5-semialdehyde: step 1/1. Oxidoreductase that catalyzes the last step in proline biosynthesis, which corresponds to the reduction of pyrroline-5-carboxylate (P5C) to L-proline using NAD(P)H. Proline is synthesized from either glutamate or ornithine; both are converted to P5C, and then to proline via pyrroline-5-carboxylate reductases (PYCRs). PYCR3 is exclusively linked to the biosynthesis of proline from ornithine. This is Pyrroline-5-carboxylate reductase 3 from Bos taurus (Bovine).